The following is a 26-amino-acid chain: FWGHIWNAVKRVGANALHGAVTGALS.

Its function is as follows. Has strong antibacterial activity against the Gram-positive bacteria M.luteus, S.aureus, B.megaterium, A.viridans and E.faecalis, and against the Gram-negative bacterium K.pneumoniae. Has less potent antibacterial activity against the Gram-negative bacteria E.coli DH5alpha, S.typhimurium, P.aeruginosa, E.aerogenes and N.gonorrhoeae. Has moderate hemolytic activity against sheep erythrocytes. The polypeptide is Halocyntin (Halocynthia papillosa (Red sea-squirt)).